We begin with the raw amino-acid sequence, 220 residues long: Phosphoserine phosphatase (220 aa).

Asp11 serves as the catalytic Nucleophile. Asp11 and Asp13 together coordinate Mg(2+). The active-site Proton donor is the Asp13. Residues Glu20, Arg56, 99–100 (SG), and Lys144 each bind substrate. Asp167 contributes to the Mg(2+) binding site. Asn170 is a substrate binding site.

The protein belongs to the HAD-like hydrolase superfamily. SerB family. Mg(2+) serves as cofactor.

It carries out the reaction O-phospho-L-serine + H2O = L-serine + phosphate. The catalysed reaction is O-phospho-D-serine + H2O = D-serine + phosphate. It functions in the pathway amino-acid biosynthesis; L-serine biosynthesis; L-serine from 3-phospho-D-glycerate: step 3/3. This is Phosphoserine phosphatase from Idiomarina loihiensis (strain ATCC BAA-735 / DSM 15497 / L2-TR).